Consider the following 336-residue polypeptide: MVKEFLKKISEGKHLNFEEAREIVLSIDREEITEAQLGAILLGLRLKGENPEEIAGFVDVLHEKAKKVPNKTPAIDVCGTGGDKSNTFNISTAVAFTLASLGIKVAKHGNRAMSSKAGSIDVIEALGFKCSDNPEEIAKDIDDKGIGIIFAPYFHPVVGKAVKVRRELGIGTIFNMAGPMLNPANLSGQILGVYSEKVMHRMAEASLILKKDNILFYHGKDDGIDEISLSGKTVFAYLKNSKIDYFEFSPEDIGVKRYQREDFNGGDAQENAKILENIFKGRAKEAHIDIVAVNSAFALWVLGKVKEVKEGFDMVKDHIMKGKVYEYIETLRGKTA.

5-phospho-alpha-D-ribose 1-diphosphate-binding positions include glycine 79, 82-83 (GD), threonine 87, 89-92 (NIST), 107-115 (KHGNRAMSS), and serine 119. Glycine 79 is a binding site for anthranilate. Serine 91 contributes to the Mg(2+) binding site. Residue asparagine 110 coordinates anthranilate. Anthranilate is bound at residue arginine 165. Mg(2+) contacts are provided by aspartate 225 and glutamate 226.

Belongs to the anthranilate phosphoribosyltransferase family. As to quaternary structure, homodimer. Mg(2+) serves as cofactor.

The catalysed reaction is N-(5-phospho-beta-D-ribosyl)anthranilate + diphosphate = 5-phospho-alpha-D-ribose 1-diphosphate + anthranilate. It functions in the pathway amino-acid biosynthesis; L-tryptophan biosynthesis; L-tryptophan from chorismate: step 2/5. Catalyzes the transfer of the phosphoribosyl group of 5-phosphorylribose-1-pyrophosphate (PRPP) to anthranilate to yield N-(5'-phosphoribosyl)-anthranilate (PRA). The chain is Anthranilate phosphoribosyltransferase from Dictyoglomus turgidum (strain DSM 6724 / Z-1310).